We begin with the raw amino-acid sequence, 463 residues long: UDP-N-acetylmuramate--L-alanine ligase (463 aa).

Residue 112–118 (GTHGKTT) participates in ATP binding.

The protein belongs to the MurCDEF family.

The protein localises to the cytoplasm. It carries out the reaction UDP-N-acetyl-alpha-D-muramate + L-alanine + ATP = UDP-N-acetyl-alpha-D-muramoyl-L-alanine + ADP + phosphate + H(+). The protein operates within cell wall biogenesis; peptidoglycan biosynthesis. Functionally, cell wall formation. This Dechloromonas aromatica (strain RCB) protein is UDP-N-acetylmuramate--L-alanine ligase.